The primary structure comprises 596 residues: Transketolase-like protein 1 (596 aa).

Position 46 (histidine 46) interacts with substrate. Residues serine 49 and 94–96 (GWL) each bind thiamine diphosphate. Residue aspartate 126 coordinates Mg(2+). Residues valine 127 and asparagine 156 each coordinate thiamine diphosphate. Positions 156 and 158 each coordinate Mg(2+). Residues lysine 218 and histidine 232 each coordinate thiamine diphosphate. Residues histidine 232, arginine 292, and serine 319 each coordinate substrate. The thiamine diphosphate site is built by glutamate 340 and phenylalanine 366. Catalysis depends on glutamate 340, which acts as the Proton donor. 2 residues coordinate substrate: histidine 390 and aspartate 398. Glutamine 402 contacts thiamine diphosphate. Arginine 448 serves as a coordination point for substrate.

Belongs to the transketolase family. In terms of assembly, homodimer. Mg(2+) serves as cofactor. Requires Ca(2+) as cofactor. The cofactor is Mn(2+). It depends on Co(2+) as a cofactor. Thiamine diphosphate is required as a cofactor.

It localises to the cytoplasm. It carries out the reaction D-sedoheptulose 7-phosphate + D-glyceraldehyde 3-phosphate = aldehydo-D-ribose 5-phosphate + D-xylulose 5-phosphate. Its function is as follows. Catalyzes the transfer of a two-carbon ketol group from a ketose donor to an aldose acceptor, via a covalent intermediate with the cofactor thiamine pyrophosphate. The chain is Transketolase-like protein 1 (TKTL1) from Bos taurus (Bovine).